Consider the following 235-residue polypeptide: uncharacterized protein (235 aa).

Positions 82-221 (LAFKKFPPDP…DTGELIRESP (140 aa)) constitute an N-acetyltransferase domain.

This sequence belongs to the acetyltransferase family.

Its subcellular location is the golgi apparatus membrane. The protein resides in the endoplasmic reticulum membrane. This is an uncharacterized protein from Schizosaccharomyces pombe (strain 972 / ATCC 24843) (Fission yeast).